The primary structure comprises 221 residues: NEP1-interacting protein-like 1 (221 aa).

Transmembrane regions (helical) follow at residues 35 to 55 (LFTF…GALI), 69 to 89 (VGAI…LLLW), and 95 to 115 (GIGC…GRLV). Residues 176–218 (CSVCLQDFQVGETVRSLPHCHHMFHLPCIDKWLRRHASCPLCR) form an RING-type; atypical zinc finger.

This sequence belongs to the RING-type zinc finger family. NIP subfamily.

It localises to the membrane. Its function is as follows. May be involved in the early steps of the plant defense signaling pathway. The protein is NEP1-interacting protein-like 1 (ATL27) of Arabidopsis thaliana (Mouse-ear cress).